The sequence spans 352 residues: S-norcoclaurine synthase 1 (352 aa).

The Fe2OG dioxygenase domain maps to 200–304 (KPLRTVFNRE…RLSIAAFHDP (105 aa)). 3 residues coordinate Fe cation: His228, Asp230, and His285.

Belongs to the iron/ascorbate-dependent oxidoreductase family. As to quaternary structure, monomer. Fe cation serves as cofactor.

It catalyses the reaction (4-hydroxyphenyl)acetaldehyde + dopamine = (S)-norcoclaurine + H2O. With respect to regulation, inhibited by O-phenanthroline, but not by EDTA. Functionally, involved in the biosynthesis of the common precursor of all benzylisoquinoline alkaloids such as morphine, sanguinarine, codeine or berberine. Condenses dopamine and phenylacetaldehyde, 3,4-dihydrophenylacetaldehyde or 4-hydroxyphenylacetaldehyde. This is S-norcoclaurine synthase 1 (NCS1) from Coptis japonica (Japanese goldthread).